The primary structure comprises 390 residues: Elongation factor Tu 2 (390 aa).

Residues 10 to 201 (KPHVNVGTIG…LDDYVEVPPR (192 aa)) enclose the tr-type G domain. The tract at residues 19-26 (GHVDHGKT) is G1. GTP is bound at residue 19–26 (GHVDHGKT). Thr-26 is a binding site for Mg(2+). Positions 55-59 (GITIA) are G2. A G3 region spans residues 76-79 (DCPG). Residues 76-80 (DCPGH) and 131-134 (NKAD) each bind GTP. Residues 131 to 134 (NKAD) are G4. Positions 168 to 170 (SAL) are G5.

Belongs to the TRAFAC class translation factor GTPase superfamily. Classic translation factor GTPase family. EF-Tu/EF-1A subfamily. In terms of assembly, monomer.

Its subcellular location is the cytoplasm. It catalyses the reaction GTP + H2O = GDP + phosphate + H(+). In terms of biological role, GTP hydrolase that promotes the GTP-dependent binding of aminoacyl-tRNA to the A-site of ribosomes during protein biosynthesis. This is Elongation factor Tu 2 from Wolbachia sp. subsp. Brugia malayi (strain TRS).